The sequence spans 442 residues: D-serine dehydratase (442 aa).

Residue lysine 118 is modified to N6-(pyridoxal phosphate)lysine.

This sequence belongs to the serine/threonine dehydratase family. DsdA subfamily. In terms of assembly, monomer. Pyridoxal 5'-phosphate is required as a cofactor.

It catalyses the reaction D-serine = pyruvate + NH4(+). The polypeptide is D-serine dehydratase (Escherichia coli (strain K12 / MC4100 / BW2952)).